The primary structure comprises 424 residues: Histidine--tRNA ligase (424 aa).

It belongs to the class-II aminoacyl-tRNA synthetase family. As to quaternary structure, homodimer.

The protein resides in the cytoplasm. The catalysed reaction is tRNA(His) + L-histidine + ATP = L-histidyl-tRNA(His) + AMP + diphosphate + H(+). The polypeptide is Histidine--tRNA ligase (Shigella flexneri).